Reading from the N-terminus, the 198-residue chain is MDSHERVAQLFHDSIRAKQDALDRIAPDIVRAGRAMARALGADRKILICGNGGSAADAQHFSSELLNRFEMERPGLPAIALTTDSSTLTSVANDYHYDEVFGRQIRALGHEGDILLAISTSGGSGNIVAAQQAAAERGMITVALSGRDGGTLAETLSAEDIEIRVPSETTARIQEVHLLVIHCLCDLIDRTLFGGPGG.

An SIS domain is found at 36-198; the sequence is MARALGADRK…DRTLFGGPGG (163 aa). Residue 51–53 coordinates substrate; that stretch reads NGG. Residues histidine 60 and glutamate 64 each contribute to the Zn(2+) site. Residues glutamate 64, 93–94, 119–121, serine 124, and glutamine 174 contribute to the substrate site; these read ND and STS. 2 residues coordinate Zn(2+): glutamine 174 and histidine 182.

It belongs to the SIS family. GmhA subfamily. In terms of assembly, homotetramer. Zn(2+) serves as cofactor.

It is found in the cytoplasm. It catalyses the reaction 2 D-sedoheptulose 7-phosphate = D-glycero-alpha-D-manno-heptose 7-phosphate + D-glycero-beta-D-manno-heptose 7-phosphate. The protein operates within carbohydrate biosynthesis; D-glycero-D-manno-heptose 7-phosphate biosynthesis; D-glycero-alpha-D-manno-heptose 7-phosphate and D-glycero-beta-D-manno-heptose 7-phosphate from sedoheptulose 7-phosphate: step 1/1. Its function is as follows. Catalyzes the isomerization of sedoheptulose 7-phosphate in D-glycero-D-manno-heptose 7-phosphate. The sequence is that of Phosphoheptose isomerase from Halorhodospira halophila (strain DSM 244 / SL1) (Ectothiorhodospira halophila (strain DSM 244 / SL1)).